The sequence spans 167 residues: Phosphorelay intermediate protein YPD1 (167 aa).

The 106-residue stretch at 24–129 folds into the HPt domain; that stretch reads DSDFSKGLII…DDEEIKIQVD (106 aa). H64 carries the post-translational modification Phosphohistidine.

The protein belongs to the YPD1 family. In terms of assembly, interacts with the response regulatory domains of SLN1 and SSK1. Post-translationally, the phosphorelay mechanism involves the sequential transfer of a phosphate group from 'His-576' (H1) to 'Asp-1144' (D1) of SLN1, then to His-64 (H2) of YPD1 and finally to 'Asp-554' (D2) of SSK1 or 'Asp-427' (D2) of SKN7.

The protein resides in the cytoplasm. The protein localises to the nucleus. Phosphorelay intermediate protein that is part of the branched SLN1-YPD1-SKN7/SSK1 two-component regulatory system, which controls activity of the HOG1 pathway and gene expression in response to changes in the osmolarity of the extracellular environment. Catalyzes the phosphoryl group transfer from the membrane-bound osmosensing histidine kinase SLN1 to two distinct response regulator proteins, SSK1 in the cytoplasm, and transcription factor SKN7 in the nucleus. The sequence is that of Phosphorelay intermediate protein YPD1 (YPD1) from Saccharomyces cerevisiae (strain ATCC 204508 / S288c) (Baker's yeast).